A 71-amino-acid chain; its full sequence is UPF0346 protein SPG_0874 (71 aa).

Belongs to the UPF0346 family.

This chain is UPF0346 protein SPG_0874, found in Streptococcus pneumoniae serotype 19F (strain G54).